The sequence spans 318 residues: Olfactory receptor 5M5 (318 aa).

Residues 1–31 (MLAPKKMVRGNYSMVTEFILLGLTDRPELQP) lie on the Extracellular side of the membrane. N11 is a glycosylation site (N-linked (GlcNAc...) asparagine). The chain crosses the membrane as a helical span at residues 32 to 52 (LLFVLFLVIYLITVGGNLGMM). The Cytoplasmic portion of the chain corresponds to 53–60 (VLIRIDSR). Residues 61–81 (LHTPMYYFLASLSCLDLCYST) traverse the membrane as a helical segment. At 82–105 (NVTPKMLVNFLSEKKTISYAACLV) the chain is on the extracellular side. C103 and C195 are oxidised to a cystine. The chain crosses the membrane as a helical span at residues 106 to 126 (QCYFFIAMVITEYYMLAVMAY). Over 127–139 (DRYMAICNPLLYS) the chain is Cytoplasmic. The helical transmembrane segment at 140-160 (SKMSKGVCVRLIAGPYIYGFL) threads the bilayer. The Extracellular portion of the chain corresponds to 161 to 202 (SGLMETMWTYRLTFCGSNIINHFYCADPPLIRLSCSDTFIKE). The helical transmembrane segment at 203–223 (TSMFVVAGFNLSNSLFIILIS) threads the bilayer. Residues 224–243 (YLFILIAILRMRSAEGRRKA) lie on the Cytoplasmic side of the membrane. Residues 244–264 (FSTCGSHLVAVTVFYGTLFCM) form a helical membrane-spanning segment. Residues 265–277 (YVRPPTDKSVEQS) lie on the Extracellular side of the membrane. A helical transmembrane segment spans residues 278–298 (KIIAVFYTFVSPMLNPIIYSL). Residues 299–318 (RNKDVKHAFWKLVRRNVLSK) are Cytoplasmic-facing.

Belongs to the G-protein coupled receptor 1 family.

The protein resides in the cell membrane. Its function is as follows. Potential odorant receptor. The chain is Olfactory receptor 5M5 from Mus musculus (Mouse).